A 178-amino-acid chain; its full sequence is Meiotically up-regulated gene 95 protein (178 aa).

Over 1–12 (MNLFVYIAQNPT) the chain is Cytoplasmic. A helical; Signal-anchor for type II membrane protein membrane pass occupies residues 13–30 (LTKWFFCCVCTILTMPFF). Residues 31 to 178 (KKPYRKRGIS…ESIEKPENDN (148 aa)) are Lumenal-facing.

It localises to the endoplasmic reticulum membrane. Its function is as follows. Has a role in meiosis. In Schizosaccharomyces pombe (strain 972 / ATCC 24843) (Fission yeast), this protein is Meiotically up-regulated gene 95 protein (mug95).